The chain runs to 701 residues: Glycine--tRNA ligase beta subunit (701 aa).

The protein belongs to the class-II aminoacyl-tRNA synthetase family. In terms of assembly, tetramer of two alpha and two beta subunits.

It localises to the cytoplasm. It catalyses the reaction tRNA(Gly) + glycine + ATP = glycyl-tRNA(Gly) + AMP + diphosphate. The sequence is that of Glycine--tRNA ligase beta subunit from Thiobacillus denitrificans (strain ATCC 25259 / T1).